Reading from the N-terminus, the 127-residue chain is Cyclin-dependent kinase 2-associated protein 2 (127 aa).

Positions 1–47 (MSYKPIAPAPSSTPGSSTPGPGTPVPTAGSVPSPSGSVPGAAAPFRP) are disordered. Positions 9-44 (APSSTPGSSTPGPGTPVPTAGSVPSPSGSVPGAAAP) are enriched in low complexity. Positions 65 to 107 (PPGSQGSQSTYTDLLSVIEEMGKEIRPTYAGSKSAMERLKRGI) are interaction with CDK2.

It belongs to the CDK2AP family. In terms of assembly, component of the nucleosome remodeling and deacetylase (NuRD) repressor complex, composed of core proteins MTA1, MTA2, MTA3, RBBP4, RBBP7, HDAC1, HDAC2, MBD2, MBD3, and peripherally associated proteins CDK2AP1, CDK2AP2, GATAD2A, GATAD2B, CHD3, CHD4 and CHD5. The exact stoichiometry of the NuRD complex is unknown, and some subunits such as MBD2 and MBD3, GATAD2A and GATAD2B, and CHD3, CHD4 and CHD5 define mutually exclusive NuRD complexes. Interacts with CDK2AP1. Interacts with CDK2. Interacts with MAPK1. In terms of processing, phosphorylated by MAPK1 and CDK2. Oocytes (at protein level).

The protein resides in the cytoplasm. The protein localises to the nucleus. Its function is as follows. Acts as a component of the histone deacetylase NuRD complex which participates in the remodeling of chromatin. Inhibits cell cycle G1/S phase transition by repressing CDK2 expression and activation; represses CDK2 activation by inhibiting its interaction with cyclin E and A. Plays a role in regulating the self-renewal of embryonic stem cells (ESCs) and in maintaining cell survival during terminal differentiation of ESCs. Regulates microtubule organization of metaphase II oocytes. The polypeptide is Cyclin-dependent kinase 2-associated protein 2 (Cdk2ap2) (Mus musculus (Mouse)).